Here is a 319-residue protein sequence, read N- to C-terminus: Ribonuclease Z (319 aa).

Zn(2+)-binding residues include His62, His64, Asp66, His67, His139, Asp209, and His268. Asp66 (proton acceptor) is an active-site residue.

Belongs to the RNase Z family. In terms of assembly, homodimer. Zn(2+) serves as cofactor.

It carries out the reaction Endonucleolytic cleavage of RNA, removing extra 3' nucleotides from tRNA precursor, generating 3' termini of tRNAs. A 3'-hydroxy group is left at the tRNA terminus and a 5'-phosphoryl group is left at the trailer molecule.. In terms of biological role, zinc phosphodiesterase, which displays some tRNA 3'-processing endonuclease activity. Probably involved in tRNA maturation, by removing a 3'-trailer from precursor tRNA. In Pseudomonas putida (strain GB-1), this protein is Ribonuclease Z.